The following is a 683-amino-acid chain: Methionine--tRNA ligase (683 aa).

A 'HIGH' region motif is present at residues 15 to 25; sequence PYANGSIHLGH. C146, C149, C159, and C162 together coordinate Zn(2+). A 'KMSKS' region motif is present at residues 332-336; sequence KMSKS. K335 contributes to the ATP binding site. One can recognise a tRNA-binding domain in the interval 582–683; it reads DFAKVDLRIA…QGAQAGMRVM (102 aa).

This sequence belongs to the class-I aminoacyl-tRNA synthetase family. MetG type 1 subfamily. In terms of assembly, homodimer. Zn(2+) serves as cofactor.

It is found in the cytoplasm. The enzyme catalyses tRNA(Met) + L-methionine + ATP = L-methionyl-tRNA(Met) + AMP + diphosphate. Functionally, is required not only for elongation of protein synthesis but also for the initiation of all mRNA translation through initiator tRNA(fMet) aminoacylation. The polypeptide is Methionine--tRNA ligase (Vibrio cholerae serotype O1 (strain ATCC 39315 / El Tor Inaba N16961)).